A 73-amino-acid chain; its full sequence is uncharacterized protein (73 aa).

This is an uncharacterized protein from Escherichia coli (strain K12).